Here is a 172-residue protein sequence, read N- to C-terminus: Ribosome maturation factor RimM (172 aa).

The 73-residue stretch at 100–172 (PGEYYRVDLV…RIVVDWDPGF (73 aa)) folds into the PRC barrel domain.

It belongs to the RimM family. As to quaternary structure, binds ribosomal protein uS19.

It is found in the cytoplasm. Functionally, an accessory protein needed during the final step in the assembly of 30S ribosomal subunit, possibly for assembly of the head region. Essential for efficient processing of 16S rRNA. May be needed both before and after RbfA during the maturation of 16S rRNA. It has affinity for free ribosomal 30S subunits but not for 70S ribosomes. The polypeptide is Ribosome maturation factor RimM (Methylococcus capsulatus (strain ATCC 33009 / NCIMB 11132 / Bath)).